Reading from the N-terminus, the 122-residue chain is Large ribosomal subunit protein uL18 (122 aa).

This sequence belongs to the universal ribosomal protein uL18 family. As to quaternary structure, part of the 50S ribosomal subunit; part of the 5S rRNA/L5/L18/L25 subcomplex. Contacts the 5S and 23S rRNAs.

This is one of the proteins that bind and probably mediate the attachment of the 5S RNA into the large ribosomal subunit, where it forms part of the central protuberance. This Desulforapulum autotrophicum (strain ATCC 43914 / DSM 3382 / VKM B-1955 / HRM2) (Desulfobacterium autotrophicum) protein is Large ribosomal subunit protein uL18.